We begin with the raw amino-acid sequence, 590 residues long: V-type ATP synthase alpha chain (590 aa).

Gly232 to Thr239 is a binding site for ATP.

Belongs to the ATPase alpha/beta chains family.

It carries out the reaction ATP + H2O + 4 H(+)(in) = ADP + phosphate + 5 H(+)(out). Its function is as follows. Produces ATP from ADP in the presence of a proton gradient across the membrane. The V-type alpha chain is a catalytic subunit. The polypeptide is V-type ATP synthase alpha chain (Thermoanaerobacter pseudethanolicus (strain ATCC 33223 / 39E) (Clostridium thermohydrosulfuricum)).